A 123-amino-acid polypeptide reads, in one-letter code: Small ribosomal subunit protein uS12 (123 aa).

At Asp89 the chain carries 3-methylthioaspartic acid. A disordered region spans residues 101 to 123 (SLDTAGVKDRKQSRSKYGAKRPK). Residues 113-123 (SRSKYGAKRPK) are compositionally biased toward basic residues.

The protein belongs to the universal ribosomal protein uS12 family. As to quaternary structure, part of the 30S ribosomal subunit. Contacts proteins S8 and S17. May interact with IF1 in the 30S initiation complex.

In terms of biological role, with S4 and S5 plays an important role in translational accuracy. Interacts with and stabilizes bases of the 16S rRNA that are involved in tRNA selection in the A site and with the mRNA backbone. Located at the interface of the 30S and 50S subunits, it traverses the body of the 30S subunit contacting proteins on the other side and probably holding the rRNA structure together. The combined cluster of proteins S8, S12 and S17 appears to hold together the shoulder and platform of the 30S subunit. The protein is Small ribosomal subunit protein uS12 of Laribacter hongkongensis (strain HLHK9).